The chain runs to 130 residues: Small ribosomal subunit protein uS11c (130 aa).

Belongs to the universal ribosomal protein uS11 family. Part of the 30S ribosomal subunit.

It localises to the plastid. The protein resides in the chloroplast. The sequence is that of Small ribosomal subunit protein uS11c from Guillardia theta (Cryptophyte).